Reading from the N-terminus, the 685-residue chain is Methionine--tRNA ligase (685 aa).

Positions 12–22 match the 'HIGH' region motif; that stretch reads PYANGSIHLGH. 4 residues coordinate Zn(2+): Cys143, Cys146, Cys156, and Cys159. A 'KMSKS' region motif is present at residues 339-343; that stretch reads KMSKS. Residue Lys342 participates in ATP binding. In terms of domain architecture, tRNA-binding spans 582-685; it reads DFMKIDMRVA…AGAQPGDKVG (104 aa).

The protein belongs to the class-I aminoacyl-tRNA synthetase family. MetG type 1 subfamily. Homodimer. Requires Zn(2+) as cofactor.

It localises to the cytoplasm. It catalyses the reaction tRNA(Met) + L-methionine + ATP = L-methionyl-tRNA(Met) + AMP + diphosphate. Functionally, is required not only for elongation of protein synthesis but also for the initiation of all mRNA translation through initiator tRNA(fMet) aminoacylation. The sequence is that of Methionine--tRNA ligase from Neisseria meningitidis serogroup C (strain 053442).